A 153-amino-acid polypeptide reads, in one-letter code: Small ribosomal subunit protein uS17 (153 aa).

The protein belongs to the universal ribosomal protein uS17 family.

The sequence is that of Small ribosomal subunit protein uS17 (RpS11) from Anopheles gambiae (African malaria mosquito).